The following is a 221-amino-acid chain: Probable transaldolase (221 aa).

The active-site Schiff-base intermediate with substrate is K83.

Belongs to the transaldolase family. Type 3B subfamily.

It localises to the cytoplasm. The enzyme catalyses D-sedoheptulose 7-phosphate + D-glyceraldehyde 3-phosphate = D-erythrose 4-phosphate + beta-D-fructose 6-phosphate. It functions in the pathway carbohydrate degradation; pentose phosphate pathway; D-glyceraldehyde 3-phosphate and beta-D-fructose 6-phosphate from D-ribose 5-phosphate and D-xylulose 5-phosphate (non-oxidative stage): step 2/3. In terms of biological role, transaldolase is important for the balance of metabolites in the pentose-phosphate pathway. This chain is Probable transaldolase, found in Herpetosiphon aurantiacus (strain ATCC 23779 / DSM 785 / 114-95).